The primary structure comprises 147 residues: Putative pre-16S rRNA nuclease (147 aa).

It belongs to the YqgF nuclease family.

It localises to the cytoplasm. In terms of biological role, could be a nuclease involved in processing of the 5'-end of pre-16S rRNA. The sequence is that of Putative pre-16S rRNA nuclease from Ligilactobacillus salivarius (strain UCC118) (Lactobacillus salivarius).